We begin with the raw amino-acid sequence, 383 residues long: uncharacterized protein (383 aa).

The protein belongs to the peptidase M20 family.

This is an uncharacterized protein from Staphylococcus aureus (strain MRSA252).